We begin with the raw amino-acid sequence, 203 residues long: Small ribosomal subunit protein uS4 (203 aa).

The S4 RNA-binding domain occupies 92–152 (LRLATVLLRA…EKSRKLVPFI (61 aa)).

The protein belongs to the universal ribosomal protein uS4 family. Part of the 30S ribosomal subunit. Contacts protein S5. The interaction surface between S4 and S5 is involved in control of translational fidelity.

One of the primary rRNA binding proteins, it binds directly to 16S rRNA where it nucleates assembly of the body of the 30S subunit. Functionally, with S5 and S12 plays an important role in translational accuracy. This chain is Small ribosomal subunit protein uS4, found in Thermobifida fusca (strain YX).